The primary structure comprises 88 residues: uncharacterized protein (88 aa).

The disordered stretch occupies residues 1-88 (MPHLPELSKQ…IRRGNPSGVA (88 aa)). Residues 21 to 65 (YRAKGEDLENSHHNNESRLAEGVHYDRNKAPALQEREKASTEKVN) show a composition bias toward basic and acidic residues.

Its function is as follows. Involved in osmoadaptation. This is an uncharacterized protein from Emericella nidulans (strain FGSC A4 / ATCC 38163 / CBS 112.46 / NRRL 194 / M139) (Aspergillus nidulans).